The following is a 368-amino-acid chain: Quinolinate synthase (368 aa).

The iminosuccinate site is built by His46 and Ser63. Cys110 contributes to the [4Fe-4S] cluster binding site. Iminosuccinate is bound by residues 141-143 and Ser162; that span reads YVN. Cys230 provides a ligand contact to [4Fe-4S] cluster. Iminosuccinate is bound by residues 256-258 and Thr273; that span reads HPE. Cys320 is a binding site for [4Fe-4S] cluster.

This sequence belongs to the quinolinate synthase family. Type 3 subfamily. The cofactor is [4Fe-4S] cluster.

Its subcellular location is the cytoplasm. The enzyme catalyses iminosuccinate + dihydroxyacetone phosphate = quinolinate + phosphate + 2 H2O + H(+). It participates in cofactor biosynthesis; NAD(+) biosynthesis; quinolinate from iminoaspartate: step 1/1. Catalyzes the condensation of iminoaspartate with dihydroxyacetone phosphate to form quinolinate. The protein is Quinolinate synthase of Bacillus thuringiensis (strain Al Hakam).